The following is a 184-amino-acid chain: Large ribosomal subunit protein uL6 (184 aa).

This sequence belongs to the universal ribosomal protein uL6 family. Part of the 50S ribosomal subunit.

Its function is as follows. This protein binds to the 23S rRNA, and is important in its secondary structure. It is located near the subunit interface in the base of the L7/L12 stalk, and near the tRNA binding site of the peptidyltransferase center. The protein is Large ribosomal subunit protein uL6 of Methanosphaera stadtmanae (strain ATCC 43021 / DSM 3091 / JCM 11832 / MCB-3).